The sequence spans 600 residues: Aspartate--tRNA(Asp/Asn) ligase (600 aa).

Position 183 (Glu183) interacts with L-aspartate. An aspartate region spans residues 207-210 (QLFK). Arg229 serves as a coordination point for L-aspartate. Residues 229 to 231 (RDE) and Gln238 each bind ATP. Residue His456 participates in L-aspartate binding. Glu490 provides a ligand contact to ATP. Arg497 contacts L-aspartate. An ATP-binding site is contributed by 542 to 545 (GLDR).

Belongs to the class-II aminoacyl-tRNA synthetase family. Type 1 subfamily. As to quaternary structure, homodimer.

The protein resides in the cytoplasm. It carries out the reaction tRNA(Asx) + L-aspartate + ATP = L-aspartyl-tRNA(Asx) + AMP + diphosphate. Aspartyl-tRNA synthetase with relaxed tRNA specificity since it is able to aspartylate not only its cognate tRNA(Asp) but also tRNA(Asn). Reaction proceeds in two steps: L-aspartate is first activated by ATP to form Asp-AMP and then transferred to the acceptor end of tRNA(Asp/Asn). This chain is Aspartate--tRNA(Asp/Asn) ligase, found in Moorella thermoacetica (strain ATCC 39073 / JCM 9320).